Here is a 617-residue protein sequence, read N- to C-terminus: Cell pattern formation-associated protein STUA (617 aa).

Residues 1 to 79 form a disordered region; that stretch reads MNQPAADMYY…PASQMGQNVL (79 aa). The span at 24–34 shows a compositional bias: polar residues; sequence TVTSGAMSYHS. The segment covering 45-58 has biased composition (low complexity); sequence PQYAPQPQYSQYGY. Over residues 61–76 the composition is skewed to polar residues; that stretch reads GLTSPQSAQPASQMGQ. Residues 106–212 enclose the HTH APSES-type domain; it reads RVTATLWEDE…HNIGALLYHP (107 aa). Positions 140 to 161 form a DNA-binding region, H-T-H motif; it reads GTKLLNVAGMTRGRRDGILKSE. Disordered stretches follow at residues 223 to 274, 300 to 451, and 463 to 617; these read AAAE…MGRP, SDSG…DSGA, and APAV…PRRR. Low complexity-rich tracts occupy residues 305 to 318 and 334 to 345; these read QWAQ…AQGA and PATPASTPPGTT. 2 stretches are compositionally biased toward polar residues: residues 346–361 and 368–382; these read IQNM…QYDN and PSAQ…NPAS. Basic and acidic residues predominate over residues 438–447; the sequence is EHDHDAEYTH. Low complexity predominate over residues 488 to 509; that stretch reads PASGRATPRTAAAPQPYYSQQA. 2 stretches are compositionally biased toward polar residues: residues 519–533 and 553–563; these read QQPS…SNDR and SMSNGYASQMN. Positions 569–593 are nuclear localization domain; the sequence is KRGRDEDDDLQRPSSGGGMDLKRRK. Low complexity predominate over residues 599–617; the sequence is QVPAMAYAPPVMAQQPRRR.

This sequence belongs to the EFG1/PHD1/stuA family.

Its subcellular location is the nucleus. In terms of biological role, transcription factor that regulates asexual reproduction. Binds the StuA-response elements (StRE) with the consensus sequence 5'-(A/T)CGCG(T/A)N(A/C)-3' at the promoters of target genes. Required for the formation of aerial hyphae, efficient conidiation, and the formation of perithecia. Essential for the generation of normal turgor pressure within the appressorium. Required for infection of intact apple fruit and penetration of onion epidermal cells. This is Cell pattern formation-associated protein STUA from Colletotrichum gloeosporioides (Anthracnose fungus).